Reading from the N-terminus, the 237-residue chain is Phosphoribosylaminoimidazole-succinocarboxamide synthase (237 aa).

This sequence belongs to the SAICAR synthetase family.

The catalysed reaction is 5-amino-1-(5-phospho-D-ribosyl)imidazole-4-carboxylate + L-aspartate + ATP = (2S)-2-[5-amino-1-(5-phospho-beta-D-ribosyl)imidazole-4-carboxamido]succinate + ADP + phosphate + 2 H(+). Its pathway is purine metabolism; IMP biosynthesis via de novo pathway; 5-amino-1-(5-phospho-D-ribosyl)imidazole-4-carboxamide from 5-amino-1-(5-phospho-D-ribosyl)imidazole-4-carboxylate: step 1/2. The protein is Phosphoribosylaminoimidazole-succinocarboxamide synthase of Pseudomonas fluorescens (strain ATCC BAA-477 / NRRL B-23932 / Pf-5).